The following is a 448-amino-acid chain: Homogentisate 1,2-dioxygenase (448 aa).

The disordered stretch occupies residues 1 to 26 (MNMLAPAAKNAFTPASPDRPAYQSGF). Residue H302 is the Proton acceptor of the active site. Positions 345 and 351 each coordinate Fe cation. Y360 and H381 together coordinate homogentisate. H381 serves as a coordination point for Fe cation.

It belongs to the homogentisate dioxygenase family. In terms of assembly, hexamer; dimer of trimers. The cofactor is Fe cation.

It catalyses the reaction homogentisate + O2 = 4-maleylacetoacetate + H(+). It functions in the pathway amino-acid degradation; L-phenylalanine degradation; acetoacetate and fumarate from L-phenylalanine: step 4/6. Its function is as follows. Involved in the catabolism of homogentisate (2,5-dihydroxyphenylacetate or 2,5-OH-PhAc), a central intermediate in the degradation of phenylalanine and tyrosine. Catalyzes the oxidative ring cleavage of the aromatic ring of homogentisate to yield maleylacetoacetate. The protein is Homogentisate 1,2-dioxygenase of Ralstonia nicotianae (strain ATCC BAA-1114 / GMI1000) (Ralstonia solanacearum).